Consider the following 127-residue polypeptide: MORF4 family-associated protein 1 (127 aa).

The stretch at 92–126 (RAAKRCEKAEEKAKEIAKMAEMLVELVRRIEKSES) forms a coiled coil.

Belongs to the MORF4 family-associated protein family. Found in a complex composed of MORF4L1, MRFAP1 and RB1. Interacts via its N-terminus with MORF4L1. Interacts with CSTB and MORF4L2.

It is found in the nucleus. The protein localises to the cytoplasm. It localises to the perinuclear region. This Homo sapiens (Human) protein is MORF4 family-associated protein 1.